A 177-amino-acid polypeptide reads, in one-letter code: Large ribosomal subunit protein uL6 (177 aa).

Belongs to the universal ribosomal protein uL6 family. In terms of assembly, part of the 50S ribosomal subunit.

In terms of biological role, this protein binds to the 23S rRNA, and is important in its secondary structure. It is located near the subunit interface in the base of the L7/L12 stalk, and near the tRNA binding site of the peptidyltransferase center. In Pectobacterium carotovorum subsp. carotovorum (strain PC1), this protein is Large ribosomal subunit protein uL6.